The sequence spans 162 residues: Probable chemoreceptor glutamine deamidase CheD (162 aa).

It belongs to the CheD family.

The enzyme catalyses L-glutaminyl-[protein] + H2O = L-glutamyl-[protein] + NH4(+). Its function is as follows. Probably deamidates glutamine residues to glutamate on methyl-accepting chemotaxis receptors (MCPs), playing an important role in chemotaxis. The protein is Probable chemoreceptor glutamine deamidase CheD of Clostridium botulinum (strain ATCC 19397 / Type A).